The chain runs to 157 residues: Endoribonuclease YbeY (157 aa).

Positions 111, 115, and 121 each coordinate Zn(2+).

This sequence belongs to the endoribonuclease YbeY family. The cofactor is Zn(2+).

The protein resides in the cytoplasm. Its function is as follows. Single strand-specific metallo-endoribonuclease involved in late-stage 70S ribosome quality control and in maturation of the 3' terminus of the 16S rRNA. The polypeptide is Endoribonuclease YbeY (Pseudomonas putida (strain W619)).